The following is a 328-amino-acid chain: Interleukin-12 subunit beta (328 aa).

The N-terminal stretch at 1-22 (MCHQQLVISWFSLVFLASPLMA) is a signal peptide. One can recognise an Ig-like C2-type domain in the interval 29–106 (DVYVVELDWY…LSHSLLLLHK (78 aa)). An intrachain disulfide couples cysteine 50 to cysteine 90. 3 N-linked (GlcNAc...) asparagine glycosylation sites follow: asparagine 125, asparagine 135, and asparagine 222. The Fibronectin type-III domain maps to 237 to 328 (PPKNLQLKPL…WSEWASVPCS (92 aa)).

This sequence belongs to the IL-12B family. In terms of assembly, heterodimer with IL12A; disulfide-linked. The heterodimer is known as interleukin IL-12. Heterodimer with IL23A; disulfide-linked. The heterodimer is known as interleukin IL-23. Also secreted as a monomer. Interacts with NBR1; this interaction promotes IL-12 secretion.

The protein resides in the secreted. Functionally, cytokine that can act as a growth factor for activated T and NK cells, enhance the lytic activity of NK/lymphokine-activated killer cells, and stimulate the production of IFN-gamma by resting PBMC. In terms of biological role, associates with IL23A to form the IL-23 interleukin, a heterodimeric cytokine which functions in innate and adaptive immunity. IL-23 may constitute with IL-17 an acute response to infection in peripheral tissues. IL-23 binds to a heterodimeric receptor complex composed of IL12RB1 and IL23R, activates the Jak-Stat signaling cascade, stimulates memory rather than naive T-cells and promotes production of pro-inflammatory cytokines. IL-23 induces autoimmune inflammation and thus may be responsible for autoimmune inflammatory diseases and may be important for tumorigenesis. In Macaca mulatta (Rhesus macaque), this protein is Interleukin-12 subunit beta (IL12B).